Consider the following 359-residue polypeptide: Protein Wnt-9b (359 aa).

The first 23 residues, 1–23, serve as a signal peptide directing secretion; sequence MRPAPALALAALCLLVLPAAAAA. 11 disulfide bridges follow: C91-C102, C137-C145, C147-C164, C212-C226, C214-C221, C293-C318, C307-C313, C317-C357, C333-C348, C335-C345, and C340-C341. N101 carries N-linked (GlcNAc...) asparagine glycosylation. S218 carries the O-palmitoleoyl serine; by PORCN lipid modification.

It belongs to the Wnt family. Forms a soluble 1:1 complex with AFM; this prevents oligomerization and is required for prolonged biological activity. The complex with AFM may represent the physiological form in body fluids. Component of the Wnt-Fzd-LRP5-LRP6 signaling complex that contains a WNT protein, a FZD protein and LRP5 or LRP6. Interacts directly in the complex with LRP6. Interacts with PKD1 (via extracellular domain). Post-translationally, palmitoleoylation is required for efficient binding to frizzled receptors. Depalmitoleoylation leads to Wnt signaling pathway inhibition.

It is found in the secreted. It localises to the extracellular space. The protein resides in the extracellular matrix. Its function is as follows. Ligand for members of the frizzled family of seven transmembrane receptors. Functions in the canonical Wnt/beta-catenin signaling pathway. Required for normal embryonic kidney development, and for normal development of the urogenital tract, including uterus and part of the oviduct and the upper vagina in females, and epididymis and vas deferens in males. Activates a signaling cascade in the metanephric mesenchyme that induces tubulogenesis. Acts upstream of WNT4 in the signaling pathways that mediate development of kidney tubules and the Muellerian ducts. Plays a role in cranofacial development and is required for normal fusion of the palate during embryonic development. The chain is Protein Wnt-9b (Wnt9b) from Mus musculus (Mouse).